Here is a 309-residue protein sequence, read N- to C-terminus: Homoserine kinase (309 aa).

Position 91-101 (91-101 (PIGSGLGSSAC)) interacts with ATP.

This sequence belongs to the GHMP kinase family. Homoserine kinase subfamily.

The protein resides in the cytoplasm. It carries out the reaction L-homoserine + ATP = O-phospho-L-homoserine + ADP + H(+). The protein operates within amino-acid biosynthesis; L-threonine biosynthesis; L-threonine from L-aspartate: step 4/5. Functionally, catalyzes the ATP-dependent phosphorylation of L-homoserine to L-homoserine phosphate. This is Homoserine kinase from Yersinia pseudotuberculosis serotype O:1b (strain IP 31758).